The primary structure comprises 137 residues: 5-hydroxyisourate hydrolase (137 aa).

Residues 1 to 23 (MLKRYLVLSVVTAAFSLPSLVYA) form the signal peptide. The substrate site is built by histidine 32, arginine 70, and tyrosine 134.

This sequence belongs to the transthyretin family. 5-hydroxyisourate hydrolase subfamily. In terms of assembly, homotetramer.

It localises to the periplasm. It catalyses the reaction 5-hydroxyisourate + H2O = 5-hydroxy-2-oxo-4-ureido-2,5-dihydro-1H-imidazole-5-carboxylate + H(+). Functionally, catalyzes the hydrolysis of 5-hydroxyisourate (HIU) to 2-oxo-4-hydroxy-4-carboxy-5-ureidoimidazoline (OHCU). The polypeptide is 5-hydroxyisourate hydrolase (hiuH) (Escherichia coli O157:H7).